The primary structure comprises 67 residues: Prokaryotic ubiquitin-like protein Pup (67 aa).

Positions 1–36 (MPQQFEQPQAQQAVTQEDDALATTQAATQTESTDQA) are enriched in low complexity. The interval 1–38 (MPQQFEQPQAQQAVTQEDDALATTQAATQTESTDQADV) is disordered. The tract at residues 23–61 (TTQAATQTESTDQADVLDDILDDIESTLETNAEEYVNSF) is ARC ATPase binding. Glu67 participates in a covalent cross-link: Isoglutamyl lysine isopeptide (Glu-Lys) (interchain with K-? in acceptor proteins).

It belongs to the prokaryotic ubiquitin-like protein family. Strongly interacts with the proteasome-associated ATPase ARC through a hydrophobic interface; the interacting region of Pup lies in its C-terminal half. There is one Pup binding site per ARC hexamer ring.

It participates in protein degradation; proteasomal Pup-dependent pathway. Its function is as follows. Protein modifier that is covalently attached to lysine residues of substrate proteins, thereby targeting them for proteasomal degradation. The tagging system is termed pupylation. The chain is Prokaryotic ubiquitin-like protein Pup from Bifidobacterium longum subsp. infantis (strain ATCC 15697 / DSM 20088 / JCM 1222 / NCTC 11817 / S12).